Consider the following 215-residue polypeptide: HTH-type transcriptional repressor FabR (215 aa).

Residues 10–70 form the HTH tetR-type domain; it reads KTRRSLVEAA…TMVDESGLML (61 aa). The H-T-H motif DNA-binding region spans 33 to 52; sequence SLREVAREAVIAPTSFYRHF.

Homodimer.

The protein localises to the cytoplasm. Its function is as follows. Represses the transcription of fabB, involved in unsaturated fatty acid (UFA) biosynthesis. By controlling UFA production, FabR directly influences the physical properties of the membrane bilayer. The polypeptide is HTH-type transcriptional repressor FabR (Escherichia coli (strain K12 / MC4100 / BW2952)).